The sequence spans 365 residues: Phosphatidylcholine:ceramide cholinephosphotransferase 4 (365 aa).

At 1–44 the chain is on the cytoplasmic side; that stretch reads MISYPFFSLSPPGLVPPPMAVPPVEMYSGSFWNRMRKPLPLRTQ. Residues 45–65 form a helical membrane-spanning segment; sequence VIRFTVVFVIVSFILAVALQI. Over 66 to 92 the chain is Lumenal; that stretch reads THERMPDPKVTKPLPDLGFELLTKVPG. A helical transmembrane segment spans residues 93-113; that stretch reads MYVLADCCIGFLNILSVFTAF. At 114 to 165 the chain is on the cytoplasmic side; it reads KLYLLHRHCVGSGEPELPCNIPGVSRFFLSVWLCKENCRIELRNIHTIAWIR. The helical transmembrane segment at 166–186 threads the bilayer; it reads FITSYALLLLFRSAVIVMTSL. The Lumenal segment spans residues 187 to 229; that stretch reads PAPDDLCQDPPKIENPVKNVILTVLTAGGGSIHCGDLMYSGHT. Histidine 228 is a catalytic residue. A helical transmembrane segment spans residues 230-250; sequence VILTLHLMFHWIYGAMVHWSF. A topological domain (cytoplasmic) is located at residue arginine 251. Residues 252 to 272 form a helical membrane-spanning segment; it reads PVVTVVAIFGYYCIVASRFHY. Catalysis depends on residues histidine 271 and aspartate 275. At 273-275 the chain is on the lumenal side; sequence TDD. A helical membrane pass occupies residues 276–296; it reads VLVAIYLTIATFIAVGHNADG. The Cytoplasmic portion of the chain corresponds to 297–365; sequence APWQLQLFIR…SLMFKCGAYV (69 aa).

Belongs to the sphingomyelin synthase family.

Its subcellular location is the golgi apparatus membrane. The catalysed reaction is an N-acylsphing-4-enine + a 1,2-diacyl-sn-glycero-3-phosphocholine = a sphingomyelin + a 1,2-diacyl-sn-glycerol. It catalyses the reaction an N-acylsphinganine + a 1,2-diacyl-sn-glycero-3-phosphocholine = an N-acylsphinganine-1-phosphocholine + a 1,2-diacyl-sn-glycerol. It carries out the reaction an N-acylsphing-4-enine + a 1,2-diacyl-sn-glycero-3-phosphoethanolamine = an N-acylsphing-4-enine 1-phosphoethanolamine + a 1,2-diacyl-sn-glycerol. The enzyme catalyses an N-acylsphinganine + a 1,2-diacyl-sn-glycero-3-phosphoethanolamine = an N-acylsphinganine-1-phosphoethanolamine + a 1,2-diacyl-sn-glycerol. The catalysed reaction is a 1,2-diacyl-sn-glycero-3-phospho-(1D-myo-inositol) + an N-acylsphing-4-enine = an N-acylsphing-4-enine-(1D-myo-inositol) + a 1,2-diacyl-sn-glycerol. It catalyses the reaction an N-acylsphinganine + a 1,2-diacyl-sn-glycero-3-phospho-(1D-myo-inositol) = an N-acylsphinganine-(1D-myo-inositol) + a 1,2-diacyl-sn-glycerol. Bifunctional sphingomyelin (SM)/ethanolamine phosphorylceramide (EPC) synthase with minimal inositol phosphorylceramide (IPC) synthase activity. Specificity is likely to be defined by residues in the lumenal catalytic domain that interact with the polar head groups of the phospholipid donors. SM is synthesized by both stages of the parasite life cycle, bloodstream forms (BSF) and procyclic forms (PCF), by transferring the phosphoryl headgroup from a 1,2-diacyl-sn-glycero-3-phosphocholine to an N-acylsphing-4-enine (ceramide) or an N-acylsphinganine (dihydroceramide) with release of 1,2-diacyl-sn-glycerol. Also catalyzes the reverse reaction, production of ceramide from sphingomyelin. EPC is synthesized by transferring phosphoethanolamine from a 1,2-diacyl-sn-glycero-3-phosphoethanolamine to ceramide or dihydroceramide by BSF and PCF, while IPC is confined to PCF. The ceramide/dihydroceramide ratios are skewed towards dihydroceramide in PCF parasites and ceramide in BSF parasites, this is likely due to differential expression and/or regulation of dihydroceramide desaturase, the enzyme responsible for converting dihydroceramide to ceramide. This chain is Phosphatidylcholine:ceramide cholinephosphotransferase 4, found in Trypanosoma brucei brucei.